Here is a 304-residue protein sequence, read N- to C-terminus: Putative S-adenosyl-L-methionine-dependent methyltransferase MMAR_1057 (304 aa).

S-adenosyl-L-methionine is bound by residues Asp130 and 159-160 (DL).

Belongs to the UPF0677 family.

Exhibits S-adenosyl-L-methionine-dependent methyltransferase activity. The chain is Putative S-adenosyl-L-methionine-dependent methyltransferase MMAR_1057 from Mycobacterium marinum (strain ATCC BAA-535 / M).